The primary structure comprises 288 residues: 33 kDa chaperonin (288 aa).

2 disulfides stabilise this stretch: Cys236/Cys238 and Cys269/Cys272.

This sequence belongs to the HSP33 family. Under oxidizing conditions two disulfide bonds are formed involving the reactive cysteines. Under reducing conditions zinc is bound to the reactive cysteines and the protein is inactive.

It localises to the cytoplasm. Its function is as follows. Redox regulated molecular chaperone. Protects both thermally unfolding and oxidatively damaged proteins from irreversible aggregation. Plays an important role in the bacterial defense system toward oxidative stress. This Lactococcus lactis subsp. cremoris (strain MG1363) protein is 33 kDa chaperonin.